A 401-amino-acid polypeptide reads, in one-letter code: NADH-quinone oxidoreductase subunit D (401 aa).

The protein belongs to the complex I 49 kDa subunit family. In terms of assembly, NDH-1 is composed of 14 different subunits. Subunits NuoB, C, D, E, F, and G constitute the peripheral sector of the complex.

It localises to the cell inner membrane. The enzyme catalyses a quinone + NADH + 5 H(+)(in) = a quinol + NAD(+) + 4 H(+)(out). NDH-1 shuttles electrons from NADH, via FMN and iron-sulfur (Fe-S) centers, to quinones in the respiratory chain. The immediate electron acceptor for the enzyme in this species is believed to be ubiquinone. Couples the redox reaction to proton translocation (for every two electrons transferred, four hydrogen ions are translocated across the cytoplasmic membrane), and thus conserves the redox energy in a proton gradient. This Rhodopseudomonas palustris (strain HaA2) protein is NADH-quinone oxidoreductase subunit D.